A 379-amino-acid chain; its full sequence is MATWNASSPAASPCSSRRRTKAPARRPSSESPPPRKMKSMAEIMAKSVPVVEQEEEEDEDSYSNVTCEKCGSGEGDDELLLCDKCDRGFHMKCLRPIVVRVPIGTWLCVDCSDQRPVRRLSQKKILHFFRIEKHTHQTDKLELSQEETRKRRRSCSLTVKKRRRKLLPLVPSEDPDQRLAQMGTLASALTALGIKYSDGLNYVPGMAPRSANQSKLEKGGMQVLCKEDLETLEQCQSMYRRGECPPLVVVFDPLEGYTVEADGPIKDLTFIAEYTGDVDYLKNREKDDCDSIMTLLLSEDPSKTLVICPDKFGNISRFINGINNHNPVAKKKQNCKCVRYSINGECRVLLVATRDISKGERLYYDYNGYEHEYPTHHFL.

Residues 1 to 15 (MATWNASSPAASPCS) are compositionally biased toward low complexity. The segment at 1-42 (MATWNASSPAASPCSSRRRTKAPARRPSSESPPPRKMKSMAE) is disordered. A chloroplast-targeting transit peptide spans 1 to 44 (MATWNASSPAASPCSSRRRTKAPARRPSSESPPPRKMKSMAEIM). The segment at 64–114 (NVTCEKCGSGEGDDELLLCDKCDRGFHMKCLRPIVVRVPIGTWLCVDCSDQ) adopts a PHD-type zinc-finger fold. Residues 122–129 (QKKILHFF) carry the PIP motif motif. M221 is a binding site for substrate. An SET domain is found at 245–367 (PPLVVVFDPL…KGERLYYDYN (123 aa)). Residues 255-257 (EGY) and 317-321 (RFING) each bind S-adenosyl-L-methionine. R339 contacts substrate. Y366 lines the S-adenosyl-L-methionine pocket. 369–370 (YE) lines the substrate pocket. An S-adenosyl-L-methionine-binding site is contributed by Y373.

Belongs to the class V-like SAM-binding methyltransferase superfamily. Histone-lysine methyltransferase family. TRX/MLL subfamily. As to quaternary structure, isoform 1 but not isoform 2 interacts with PCNA1 and PCNA2. Interacts (via PHD domain) with HTR1 (via N-terminus). Isoform 2 interacts with IPS1. As to expression, expressed in leaves, roots, stems, flowers, siliques and developing pollen. Up-regulated in tissues where cell division is active.

It is found in the nucleus. The protein localises to the plastid. The protein resides in the chloroplast. The enzyme catalyses L-lysyl(27)-[histone H3] + S-adenosyl-L-methionine = N(6)-methyl-L-lysyl(27)-[histone H3] + S-adenosyl-L-homocysteine + H(+). Histone methyltransferase that specifically monomethylates 'Lys-27' of histone H3 (H3K27me1). Has much higher activity on nucleosomes containing H3.1 than H3.3. Involved in the formation of constitutive heterochromatin and the silencing of heterochromatic elements. Influences which sets of rRNA gene variants are expressed or silenced. In Arabidopsis thaliana (Mouse-ear cress), this protein is Histone-lysine N-methyltransferase ATXR5 (ATXR5).